The following is a 208-amino-acid chain: LexA repressor (208 aa).

Positions Val-30 to Glu-50 form a DNA-binding region, H-T-H motif. Active-site for autocatalytic cleavage activity residues include Ser-129 and Lys-167.

This sequence belongs to the peptidase S24 family. Homodimer.

The catalysed reaction is Hydrolysis of Ala-|-Gly bond in repressor LexA.. Its function is as follows. Represses a number of genes involved in the response to DNA damage (SOS response), including recA and lexA. In the presence of single-stranded DNA, RecA interacts with LexA causing an autocatalytic cleavage which disrupts the DNA-binding part of LexA, leading to derepression of the SOS regulon and eventually DNA repair. The protein is LexA repressor of Lacticaseibacillus casei (strain BL23) (Lactobacillus casei).